Reading from the N-terminus, the 760-residue chain is Exostosin-1 (760 aa).

The Cytoplasmic segment spans residues 1 to 6; the sequence is MQAKKR. Residues 7 to 25 form a helical; Signal-anchor for type II membrane protein membrane-spanning segment; it reads YILVFVSCAFLAYAYFGGY. Residues 26 to 760 are Lumenal-facing; sequence RLKVSPLRPR…KYRQIELVGS (735 aa). N-linked (GlcNAc...) asparagine glycosylation is found at Asn-71 and Asn-327. Residue Arg-437 participates in UDP-N-acetyl-alpha-D-glucosamine binding. Asn-476 is a glycosylation site (N-linked (GlcNAc...) asparagine). Residues 540-560 are disordered; the sequence is LGGSTRSQGAGPTSQTTEGRP. Polar residues predominate over residues 541 to 560; the sequence is GGSTRSQGAGPTSQTTEGRP. Positions 565, 581, 582, 583, 669, 670, and 713 each coordinate UDP-N-acetyl-alpha-D-glucosamine. Asp-583 is a Mn(2+) binding site. Residues Cys-668 and Cys-716 are joined by a disulfide bond. Residue Asp-670 is part of the active site.

This sequence belongs to the glycosyltransferase 47 family. As to quaternary structure, interacts with sau. Mn(2+) is required as a cofactor. In terms of tissue distribution, ubiquitously expressed in early embryos. Later (in stage 10 embryos), it is expressed at higher level in the nervous system. Ubiquitously expressed in wing imaginal disk.

The protein resides in the endoplasmic reticulum membrane. It localises to the golgi apparatus membrane. It catalyses the reaction 3-O-{[(1-&gt;4)-beta-D-GlcA-(1-&gt;4)-alpha-D-GlcNAc](n)-(1-&gt;4)-beta-D-GlcA-(1-&gt;3)-beta-D-Gal-(1-&gt;3)-beta-D-Gal-(1-&gt;4)-beta-D-Xyl}-L-seryl-[protein] + UDP-N-acetyl-alpha-D-glucosamine = 3-O-{alpha-D-GlcNAc-[(1-&gt;4)-beta-D-GlcA-(1-&gt;4)-alpha-D-GlcNAc](n)-(1-&gt;4)-beta-D-GlcA-(1-&gt;3)-beta-D-Gal-(1-&gt;3)-beta-D-Gal-(1-&gt;4)-beta-D-Xyl}-L-seryl-[protein] + UDP + H(+). The enzyme catalyses 3-O-{alpha-D-GlcNAc-[(1-&gt;4)-beta-D-GlcA-(1-&gt;4)-alpha-D-GlcNAc](n)-(1-&gt;4)-beta-D-GlcA-(1-&gt;3)-beta-D-Gal-(1-&gt;3)-beta-D-Gal-(1-&gt;4)-beta-D-Xyl}-L-seryl-[protein] + UDP-alpha-D-glucuronate = 3-O-{[(1-&gt;4)-beta-D-GlcA-(1-&gt;4)-alpha-D-GlcNAc](n+1)-(1-&gt;4)-beta-D-GlcA-(1-&gt;3)-beta-D-Gal-(1-&gt;3)-beta-D-Gal-(1-&gt;4)-beta-D-Xyl}-L-seryl-[protein] + UDP + H(+). It participates in protein modification; protein glycosylation. The protein operates within glycan metabolism; heparan sulfate biosynthesis. It functions in the pathway glycan metabolism; heparin biosynthesis. Functionally, glycosyltransferase required for the biosynthesis of heparan-sulfate and responsible for the alternating addition of beta-1-4-linked glucuronic acid (GlcA) and alpha-1-4-linked N-acetylglucosamine (GlcNAc) units to nascent heparan sulfate chains. Botv is the trigger of heparan sulfate chain initiation and polymerization takes place by a complex of ttv and sotv. Plays a central role in the diffusion of morphogens hedgehog (hh), wingless (wg) and decapentaplegic (dpp) via its role in heparan sulfate proteoglycans (HSPGs) biosynthesis which are required for movement of hh, dpp and wg morphogens. The sequence is that of Exostosin-1 (ttv) from Drosophila melanogaster (Fruit fly).